Reading from the N-terminus, the 163-residue chain is 2-C-methyl-D-erythritol 2,4-cyclodiphosphate synthase (163 aa).

A divalent metal cation contacts are provided by aspartate 11 and histidine 13. 4-CDP-2-C-methyl-D-erythritol 2-phosphate contacts are provided by residues aspartate 11 to histidine 13 and histidine 37 to serine 38. Histidine 45 contacts a divalent metal cation. Residues aspartate 59 to glycine 61, phenylalanine 64 to aspartate 68, alanine 103 to alanine 109, and arginine 145 contribute to the 4-CDP-2-C-methyl-D-erythritol 2-phosphate site.

The protein belongs to the IspF family. As to quaternary structure, homotrimer. The cofactor is a divalent metal cation.

It carries out the reaction 4-CDP-2-C-methyl-D-erythritol 2-phosphate = 2-C-methyl-D-erythritol 2,4-cyclic diphosphate + CMP. It participates in isoprenoid biosynthesis; isopentenyl diphosphate biosynthesis via DXP pathway; isopentenyl diphosphate from 1-deoxy-D-xylulose 5-phosphate: step 4/6. Its function is as follows. Involved in the biosynthesis of isopentenyl diphosphate (IPP) and dimethylallyl diphosphate (DMAPP), two major building blocks of isoprenoid compounds. Catalyzes the conversion of 4-diphosphocytidyl-2-C-methyl-D-erythritol 2-phosphate (CDP-ME2P) to 2-C-methyl-D-erythritol 2,4-cyclodiphosphate (ME-CPP) with a corresponding release of cytidine 5-monophosphate (CMP). This Nitrosomonas europaea (strain ATCC 19718 / CIP 103999 / KCTC 2705 / NBRC 14298) protein is 2-C-methyl-D-erythritol 2,4-cyclodiphosphate synthase.